The following is a 354-amino-acid chain: Methionine aminotransferase BCAT4 (354 aa).

K198 carries the N6-(pyridoxal phosphate)lysine modification.

Belongs to the class-IV pyridoxal-phosphate-dependent aminotransferase family. Requires pyridoxal 5'-phosphate as cofactor. As to expression, mostly expressed in phloem.

It localises to the cytoplasm. The enzyme catalyses a 2-oxocarboxylate + L-methionine = 4-methylsulfanyl-2-oxobutanoate + an L-alpha-amino acid. Converts 2-oxo acids to branched-chain amino acids. Shows activity with L-Leu, L-Ile and L-Val as amino donors and alpha-keto-glutarate as an amino acceptor, but no activity for D-isomers of Leu, Ile, Val, Asp, Glu or Ala. Acts on methionine and its derivatives and the corresponding 2-oxo acids. Catalyzes the initial deamination of methionine to 4-methylthio-2-oxobutyrate as well as the transamination of other typical intermediates of the methionine chain elongation pathway. The polypeptide is Methionine aminotransferase BCAT4 (BCAT4) (Arabidopsis thaliana (Mouse-ear cress)).